Reading from the N-terminus, the 271-residue chain is Tropinone reductase homolog At2g29360 (271 aa).

22–46 (LVTGGSKGIGEAVVEELATLGARIH) contributes to the NADP(+) binding site. A substrate-binding site is contributed by Ser-155. The active-site Proton acceptor is the Tyr-168.

It belongs to the short-chain dehydrogenases/reductases (SDR) family. SDR65C subfamily.

In terms of biological role, oxidoreductase active on cyclic ketones, but not on tropinone or nortropinone. This is Tropinone reductase homolog At2g29360 from Arabidopsis thaliana (Mouse-ear cress).